The following is a 485-amino-acid chain: Cysteine--tRNA ligase (485 aa).

Cys-27 lines the Zn(2+) pocket. The 'HIGH' region signature appears at 29-39 (ITAYDLCHIGH). Zn(2+) contacts are provided by Cys-208, His-233, and Glu-237. Residues 265–269 (KMSKS) carry the 'KMSKS' region motif. Lys-268 serves as a coordination point for ATP.

This sequence belongs to the class-I aminoacyl-tRNA synthetase family. In terms of assembly, monomer. Zn(2+) is required as a cofactor.

Its subcellular location is the cytoplasm. It carries out the reaction tRNA(Cys) + L-cysteine + ATP = L-cysteinyl-tRNA(Cys) + AMP + diphosphate. The sequence is that of Cysteine--tRNA ligase from Solidesulfovibrio magneticus (strain ATCC 700980 / DSM 13731 / RS-1) (Desulfovibrio magneticus).